The chain runs to 1712 residues: MATALQKQLAAIAASSTHQLDLKAQKSAHGKSLLFEPKIAASQSFETVYLICYEGFRDLCALDSRFLQFSKSLFSEQSKVEDRTQMTKEENKKLNAVVEAFITLVVNTPGFFNALQAHTVRVVKAGHQAPQMISFWSTITLEAVFGILENTSSGRRDIQSQKTEELVLRILPVLNSCMQAKYGAETVAACYSIVTVLAGRGELGEKVLDGLMEAVVLAHEADSLNACLQCLAVLAEQRSPAQLPPRVIRRLLKVPQLSQKLVQISKQCRVHRLTLGCALGALASIDRLEEQRDVFQELMASGLLTEAYTRAALAALVTSIRDSAPGSTEHGQLLDLAAQLAETTYFLDGMRAAAKSDNVDLESLGLTLAPALETAQIDNDEDEDMLDVDDVSSQAIAAPKVEVPDFAVQSFLELDASQSFAEVANAFERAVSTHQSSPFLASKSLGKENAMHSNLYLSLLARIWCSSQLPAARIAALRAAAATLKSAEDTCDFQNLIPYLLHALADPSAPVRRAAAACTVALSEASGSQANTSTWGSSKLYGSSGKAQKHVSQVVQLKSEDVSTLLSSILIPMLEESVMDPTFAIPAIREVLEGSKGSKSQPKHGMNAQTRTYYRLSFFASHLSLSPLVRIRIILFPIFNFSGKVSDTVRSNTILPLIQGWCTLPLAEASKVCDVEKVTLEDAYRGHLNALVAREAKSVQLLNELMIESLDSSKRLLAEAVFDKVAAVWPATKSEQRVTLARTLLDMSFKEGKDDGEKQCRERAIEILRNVKHDSATLLTFLESVPAAVQMPEGPPTKKRRRTSRNEMARVELASQDDVQRFVAKADFGFFELIEGSNPGQPSQPFSRVYSLSSTTWQPLKQQSGSELVYVQSMILGSLTPIVDTLKVSDLVVHGFMHANTVQQQKDTADYQSSVRADLLIDCIRHSTSPQVQNSALLLIANLASWVPELILHNLMPIFTFIGSTLLRQQDDYSAQVVDKVWCYHFTQTISRVVPQLAASLRAKHKNFLTGVSDLLLSFTAAFEHIPLHRRLKLFSELARTLGPQDSLSAIISLLADRYHNGKTQRRFSTELLLVFDPIHTLDAIKGYLDLVVDAAGPKRKVSDSLFGLNDKTAAQVETAIKNLLVSLADLATDDRLRAHVTRAFRRKDDPARPREVFANIVETTIQLSKKVASSPKLYEACSRVLANCLDLLPTTDLVKSAELLLVNTDHQVQIAAIKAVELRAGNAVQNDKKSVISLISFLPSVEKVLQQSQHTDAKIISVGCIDRIVERFGKKDMTAVASIAQTIAGSQALSSGNDTIRVLSLLCLTSIVDVLEDEAIALLPTVLPTAFDYLSQAIEGEKNGLHNAVYSLLSNIVERLGYMFSRDYLETALRLSHRSAVGGLEDTCDESRRTFYQNVSEHLGAQETFAAIKTTWPHALSQGFEASSEHLELLRSTVDLQSKSKLIKASSTLSEQAIDSQEEQEYDDEEMNQLDNTLMSRTCHGSEAQRCPPSGPFFVQLVDQEGPMSAKPEYAVTFYKFLAAFFDKFKSDCSRATQATSSTTQPKMLEHVAQEDADSELRSAVLGALQKSFQHDQDAFWQAPSHFGTILKPLVNLLTISATEEVTEVVIPTITDLAASSSSSIDNHRELNTILLRYMRSDSAATRLATVKCEQSLTTRLGEEWLGLLPEMLPFISELREDDDEMVERETQRWISQVEGVLGESLEGMLQ.

HEAT repeat units lie at residues 164-202, 490-528, 564-605, 987-1025, 1236-1275, 1605-1646, and 1667-1705; these read EELV…GRGE, TCDF…ASGS, TLLS…PKHG, TQTI…AFEH, VISL…RFGK, EEVT…DSAA, and LGLL…VLGE.

This sequence belongs to the HEATR1/UTP10 family. Component of the ribosomal small subunit (SSU) processome.

It is found in the nucleus. The protein resides in the nucleolus. Functionally, involved in nucleolar processing of pre-18S ribosomal RNA. Involved in ribosome biosynthesis. This Phaeosphaeria nodorum (strain SN15 / ATCC MYA-4574 / FGSC 10173) (Glume blotch fungus) protein is U3 small nucleolar RNA-associated protein 10.